Consider the following 344-residue polypeptide: Anthranilate phosphoribosyltransferase (344 aa).

5-phospho-alpha-D-ribose 1-diphosphate-binding positions include G85, 88-89, T93, 95-98, 113-121, and S125; these read GD, NIST, and KHGGRSVSS. Position 85 (G85) interacts with anthranilate. S97 contributes to the Mg(2+) binding site. Anthranilate is bound at residue R171. D230 and E231 together coordinate Mg(2+).

It belongs to the anthranilate phosphoribosyltransferase family. As to quaternary structure, homodimer. Mg(2+) is required as a cofactor.

The catalysed reaction is N-(5-phospho-beta-D-ribosyl)anthranilate + diphosphate = 5-phospho-alpha-D-ribose 1-diphosphate + anthranilate. The protein operates within amino-acid biosynthesis; L-tryptophan biosynthesis; L-tryptophan from chorismate: step 2/5. In terms of biological role, catalyzes the transfer of the phosphoribosyl group of 5-phosphorylribose-1-pyrophosphate (PRPP) to anthranilate to yield N-(5'-phosphoribosyl)-anthranilate (PRA). The polypeptide is Anthranilate phosphoribosyltransferase (Acidovorax ebreus (strain TPSY) (Diaphorobacter sp. (strain TPSY))).